Consider the following 365-residue polypeptide: LIM and cysteine-rich domains protein 1 (365 aa).

The residue at position 16 (serine 16) is a Phosphoserine. In terms of domain architecture, PET spans 99–206 (MIMTNPIATG…GEVALPGQGG (108 aa)). The interval 200–235 (ALPGQGGLPKEEGKQQEKPEGAETTAATTNGSLSDP) is disordered. Residues 208–220 (PKEEGKQQEKPEG) are compositionally biased toward basic and acidic residues. 2 consecutive LIM zinc-binding domains span residues 241 to 306 (YVCE…SLRP) and 307 to 365 (RCSG…SKRS).

Interacts with GATA1 and GATA4. Interacts with beta-dystroglycan. Interacts with GATA6. As to expression, expressed in the heart (at protein level). Expressed in many tissues with highest abundance in skeletal muscle.

Its subcellular location is the cytoplasm. The protein localises to the nucleus. Its function is as follows. Transcriptional cofactor that restricts GATA6 function by inhibiting DNA-binding, resulting in repression of GATA6 transcriptional activation of downstream target genes. Represses GATA6-mediated trans activation of lung- and cardiac tissue-specific promoters. Inhibits DNA-binding by GATA4 and GATA1 to the cTNC promoter. Plays a critical role in the development of cardiac hypertrophy via activation of calcineurin/nuclear factor of activated T-cells signaling pathway. The polypeptide is LIM and cysteine-rich domains protein 1 (LMCD1) (Homo sapiens (Human)).